The chain runs to 498 residues: Pyridine nucleotide-disulfide oxidoreductase domain-containing protein 1 (498 aa).

N-acetylmethionine is present on methionine 1.

Belongs to the class-I pyridine nucleotide-disulfide oxidoreductase family. PYROXD1 subfamily. The cofactor is FAD.

The protein localises to the nucleus. Its subcellular location is the cytoplasm. The protein resides in the myofibril. It is found in the sarcomere. Its function is as follows. Probable FAD-dependent oxidoreductase; involved in the cellular oxidative stress response. Required for normal sarcomere structure and muscle fiber integrity. The sequence is that of Pyridine nucleotide-disulfide oxidoreductase domain-containing protein 1 (Pyroxd1) from Mus musculus (Mouse).